The chain runs to 388 residues: Chorismate synthase (388 aa).

NADP(+)-binding residues include Arg-39 and Arg-45. FMN contacts are provided by residues 130–132 (RSS), 251–252 (NA), Gly-296, 311–315 (KPIPT), and Arg-337.

The protein belongs to the chorismate synthase family. Homotetramer. FMNH2 is required as a cofactor.

It carries out the reaction 5-O-(1-carboxyvinyl)-3-phosphoshikimate = chorismate + phosphate. Its pathway is metabolic intermediate biosynthesis; chorismate biosynthesis; chorismate from D-erythrose 4-phosphate and phosphoenolpyruvate: step 7/7. Catalyzes the anti-1,4-elimination of the C-3 phosphate and the C-6 proR hydrogen from 5-enolpyruvylshikimate-3-phosphate (EPSP) to yield chorismate, which is the branch point compound that serves as the starting substrate for the three terminal pathways of aromatic amino acid biosynthesis. This reaction introduces a second double bond into the aromatic ring system. This Geobacillus thermodenitrificans (strain NG80-2) protein is Chorismate synthase.